The sequence spans 247 residues: Adenosylcobinamide-GDP ribazoletransferase (247 aa).

The next 5 helical transmembrane spans lie at 34 to 54 (IVMF…IFIL), 59 to 79 (CGIP…TGGF), 113 to 133 (GGLA…ELAL), 138 to 158 (MLAA…LLMY), and 187 to 207 (LAVI…AMVV).

The protein belongs to the CobS family. Mg(2+) is required as a cofactor.

It localises to the cell inner membrane. It catalyses the reaction alpha-ribazole + adenosylcob(III)inamide-GDP = adenosylcob(III)alamin + GMP + H(+). The enzyme catalyses alpha-ribazole 5'-phosphate + adenosylcob(III)inamide-GDP = adenosylcob(III)alamin 5'-phosphate + GMP + H(+). The protein operates within cofactor biosynthesis; adenosylcobalamin biosynthesis; adenosylcobalamin from cob(II)yrinate a,c-diamide: step 7/7. Joins adenosylcobinamide-GDP and alpha-ribazole to generate adenosylcobalamin (Ado-cobalamin). Also synthesizes adenosylcobalamin 5'-phosphate from adenosylcobinamide-GDP and alpha-ribazole 5'-phosphate. The polypeptide is Adenosylcobinamide-GDP ribazoletransferase (Salmonella choleraesuis (strain SC-B67)).